Reading from the N-terminus, the 305-residue chain is MNEVFESYLTYSAGVRQFTKATIDSYKNDLIIFEEWLKELDLNIFELKASDIRIFIAELADKKIAPASINRMMSTLRGFYKYALRFNLTKMNPISSVRNLKLAQKLPVFMFPKQAQEFCRLPSNAGILWETRDAALFASLYSTGCRVSELAGLDIKDLDKTLSYAIVFGKGKKERKVFFAEFAKEYLREYLKERSDLVEKFKGQVQKDGKGKIRDTLFINQKAQPLTSRGIRYIIDRYVELSPELKHLSPHAFRHSFASTLITRGADIRVVQELLGHESVSTTQRYTHITAEQLQNLYKTAHPHS.

Positions 1-84 (MNEVFESYLT…TLRGFYKYAL (84 aa)) constitute a Core-binding (CB) domain. The Tyr recombinase domain occupies 105 to 299 (KLPVFMFPKQ…TAEQLQNLYK (195 aa)). Active-site residues include Arg-146, Lys-170, His-251, Arg-254, and His-277. Residue Tyr-286 is the O-(3'-phospho-DNA)-tyrosine intermediate of the active site.

The protein belongs to the 'phage' integrase family. XerC subfamily. As to quaternary structure, forms a cyclic heterotetrameric complex composed of two molecules of XerC and two molecules of XerD.

It localises to the cytoplasm. In terms of biological role, site-specific tyrosine recombinase, which acts by catalyzing the cutting and rejoining of the recombining DNA molecules. The XerC-XerD complex is essential to convert dimers of the bacterial chromosome into monomers to permit their segregation at cell division. It also contributes to the segregational stability of plasmids. The protein is Tyrosine recombinase XerC of Treponema denticola (strain ATCC 35405 / DSM 14222 / CIP 103919 / JCM 8153 / KCTC 15104).